The sequence spans 21 residues: Maculatin-1.1 (21 aa).

Phe-21 is modified (phenylalanine amide).

As to expression, expressed by the skin dorsal glands.

The protein localises to the secreted. Functionally, maculatin-1.1 shows significant antibacterial activity against Gram-positive bacteria, less against Gram-negative bacteria. Maculatin-1.1.1 is inactive. This Ranoidea genimaculata (Brown-spotted tree frog) protein is Maculatin-1.1.